Here is a 251-residue protein sequence, read N- to C-terminus: Triosephosphate isomerase (251 aa).

12 to 14 (NWK) provides a ligand contact to substrate. His-98 functions as the Electrophile in the catalytic mechanism. Glu-168 acts as the Proton acceptor in catalysis. Substrate contacts are provided by residues Gly-174, Ser-213, and 234–235 (GG).

This sequence belongs to the triosephosphate isomerase family. As to quaternary structure, homodimer.

It localises to the cytoplasm. The catalysed reaction is D-glyceraldehyde 3-phosphate = dihydroxyacetone phosphate. Its pathway is carbohydrate biosynthesis; gluconeogenesis. It participates in carbohydrate degradation; glycolysis; D-glyceraldehyde 3-phosphate from glycerone phosphate: step 1/1. Its function is as follows. Involved in the gluconeogenesis. Catalyzes stereospecifically the conversion of dihydroxyacetone phosphate (DHAP) to D-glyceraldehyde-3-phosphate (G3P). In Bradyrhizobium diazoefficiens (strain JCM 10833 / BCRC 13528 / IAM 13628 / NBRC 14792 / USDA 110), this protein is Triosephosphate isomerase.